The following is a 204-amino-acid chain: Peptide deformylase (204 aa).

Fe cation is bound by residues cysteine 131 and histidine 174. The active site involves glutamate 175. Residue histidine 178 coordinates Fe cation.

It belongs to the polypeptide deformylase family. The cofactor is Fe(2+).

The catalysed reaction is N-terminal N-formyl-L-methionyl-[peptide] + H2O = N-terminal L-methionyl-[peptide] + formate. Functionally, removes the formyl group from the N-terminal Met of newly synthesized proteins. Requires at least a dipeptide for an efficient rate of reaction. N-terminal L-methionine is a prerequisite for activity but the enzyme has broad specificity at other positions. The chain is Peptide deformylase from Streptococcus pyogenes serotype M49 (strain NZ131).